A 465-amino-acid chain; its full sequence is Mothers against decapentaplegic homolog 1 (465 aa).

An N-acetylmethionine modification is found at M1. One can recognise an MH1 domain in the interval 12–136 (PAVKRLLGWK…YKRVESPVLP (125 aa)). Positions 64, 109, 121, and 126 each coordinate Zn(2+). Residues 162–246 (NEPHMPLNAT…DGSQPMDTNM (85 aa)) form a disordered region. Over residues 179–212 (PNSHPFPHSPNSSYPNSPGGSSSTYPHSPTSSDP) the composition is skewed to low complexity. Positions 221 to 232 (DTPPPAYLPPED) are enriched in pro residues. One can recognise an MH2 domain in the interval 271 to 465 (WCSIVYYELN…SPHNPISSVS (195 aa)). Position 322 is a phosphothreonine; by MINK1, TNIK and MAP4K4 (T322). The segment at 418-428 (KGWGAEYHRQD) is L3 loop. Phosphoserine is present on residues S463 and S465.

Belongs to the dwarfin/SMAD family. In terms of assembly, found in a complex with SMAD4 and YY1. Interacts with HGS, NANOG and ZCCHC12. Upon C-terminus phosphorylation: forms trimers with another SMAD1 and the co-SMAD SMAD4. Interacts with PEBP2-alpha subunit, CREB-binding protein (CBP), p300, SMURF1, SMURF2, USP15 and HOXC8. Associates with ZNF423 or ZNF521 in response to BMP2 leading to activate transcription of BMP target genes. Interacts with SKOR1. Interacts (via MH2 domain) with LEMD3. Binding to LEMD3 results in at least a partial reduction of receptor-mediated phosphorylation. Forms a ternary complex with PSMB4 and OAZ1 before PSMB4 is incorporated into the 20S proteasome. Interacts (via MH2 domain) with FAM83G (via MH2 domain); in a SMAD4-independent manner. Interacts with ZC3H3. Interacts with TMEM119. Interacts (via MH1 and MH2 domains) with ZNF8. Interacts with RANBP3L; the interaction increases when SMAD1 is not phosphorylated and mediates SMAD1 nuclear export. Interacts with EGR1; this interaction inhibits SMAD1 dephosphorylation. Interacts with SMAD6. Interacts with YAP1. Interacts with MTMR4; negatively regulates BMP signaling through SMAD1 dephosphorylation and retention in endosomes. Phosphorylation of the C-terminal SVS motif by BMP type 1 receptor kinase activates SMAD1 by promoting dissociation from the receptor and trimerization with SMAD4. Phosphorylation by ERK2 MAP kinase in response to EGF or HGF prevents SMAD1 nuclear accumulation and transcriptional activity in response to BMP. Dephosphorylation, probably by PPM1A, induces its export from the nucleus to the cytoplasm. Dephosphorylation is inhibited by association with EGR1. Phosphorylation by CDK8/9 creates binding sites for YAP1, and subsequent phosphorylation by GSK3 switches off YAP1 binding and adds binding sites for SMURF1. Post-translationally, ubiquitinated by SMAD-specific E3 ubiquitin ligase SMURF1, leading to its degradation. Monoubiquitinated, leading to prevent DNA-binding. Deubiquitination by USP15 alleviates inhibition and promotes activation of TGF-beta target genes. Dephosphorylation, probably by PPM1A, induces its export from the nucleus to the cytoplasm. Phospho-SMAD1 is ubiquitinated by CHIP leading to disruption of the SMAD1-SMAD4 complex. In terms of tissue distribution, ubiquitous.

It localises to the cytoplasm. The protein localises to the nucleus. In terms of biological role, transcriptional modulator that plays a role in various cellular processes, including embryonic development, cell differentiation, and tissue homeostasis. Upon BMP ligand binding to their receptors at the cell surface, is phosphorylated by activated type I BMP receptors (BMPRIs) and associates with SMAD4 to form a heteromeric complex which translocates into the nucleus acting as transcription factor. In turn, the hetero-trimeric complex recognizes cis-regulatory elements containing Smad Binding Elements (SBEs) to modulate the outcome of the signaling network. SMAD1/OAZ1/PSMB4 complex mediates the degradation of the CREBBP/EP300 repressor SNIP1. Positively regulates BMP4-induced expression of odontogenic development regulator MSX1 following IPO7-mediated nuclear import. This chain is Mothers against decapentaplegic homolog 1 (Smad1), found in Mus musculus (Mouse).